Here is a 243-residue protein sequence, read N- to C-terminus: Homeobox protein goosecoid isoform B (243 aa).

The homeobox DNA-binding region spans lysine 148–lysine 207. The tract at residues alanine 201–serine 243 is disordered. A compositionally biased stretch (polar residues) spans alanine 217–asparagine 226. The span at serine 227–serine 243 shows a compositional bias: basic and acidic residues.

Belongs to the paired homeobox family. Bicoid subfamily.

The protein localises to the nucleus. Its function is as follows. Plays a central role in executing Spemann's organizer phenomenon (the dorsal blastopore lip of the early Xenopus laevis gastrula can organize a complete secondary body axis when transplanted to another embryo). The sequence is that of Homeobox protein goosecoid isoform B (gsc-b) from Xenopus laevis (African clawed frog).